The primary structure comprises 524 residues: Glutamyl-tRNA(Gln) amidotransferase subunit A, mitochondrial (524 aa).

Residues lysine 76 and serine 171 each act as charge relay system in the active site. The Acyl-ester intermediate role is filled by serine 195.

The protein belongs to the amidase family. GatA subfamily. As to quaternary structure, subunit of the heterotrimeric GatCAB amidotransferase (AdT) complex, composed of A (qrsl1), B (gatb) and C (gatc) subunits.

It is found in the mitochondrion. It catalyses the reaction L-glutamyl-tRNA(Gln) + L-glutamine + ATP + H2O = L-glutaminyl-tRNA(Gln) + L-glutamate + ADP + phosphate + H(+). Its function is as follows. Allows the formation of correctly charged Gln-tRNA(Gln) through the transamidation of misacylated Glu-tRNA(Gln) in the mitochondria. The reaction takes place in the presence of glutamine and ATP through an activated gamma-phospho-Glu-tRNA(Gln). The sequence is that of Glutamyl-tRNA(Gln) amidotransferase subunit A, mitochondrial (qrsl1) from Xenopus tropicalis (Western clawed frog).